We begin with the raw amino-acid sequence, 366 residues long: NAD(P)H-quinone oxidoreductase subunit 1, chloroplastic (366 aa).

Helical transmembrane passes span 28-48, 105-125, 128-148, 250-270, 271-291, 303-323, and 346-366; these read IWLLVPIFTPLLGIIIGVLVI, IAVISILLSYSVIPFGYHLVL, LSIGVFLWIAISSIAPIGLLM, SGIKFGLFYVASYLNLLVSSL, FVTVLYLGGWNLSIPYIFIFI, IFGMTIGIFITLAKAYLFLFI, and FLLPISLGNLLLTTSFQLLSL.

Belongs to the complex I subunit 1 family. NDH is composed of at least 16 different subunits, 5 of which are encoded in the nucleus.

The protein localises to the plastid. The protein resides in the chloroplast thylakoid membrane. It carries out the reaction a plastoquinone + NADH + (n+1) H(+)(in) = a plastoquinol + NAD(+) + n H(+)(out). It catalyses the reaction a plastoquinone + NADPH + (n+1) H(+)(in) = a plastoquinol + NADP(+) + n H(+)(out). NDH shuttles electrons from NAD(P)H:plastoquinone, via FMN and iron-sulfur (Fe-S) centers, to quinones in the photosynthetic chain and possibly in a chloroplast respiratory chain. The immediate electron acceptor for the enzyme in this species is believed to be plastoquinone. Couples the redox reaction to proton translocation, and thus conserves the redox energy in a proton gradient. The chain is NAD(P)H-quinone oxidoreductase subunit 1, chloroplastic from Nandina domestica (Heavenly bamboo).